The chain runs to 450 residues: Methylenetetrahydrofolate--tRNA-(uracil-5-)-methyltransferase TrmFO (450 aa).

9 to 14 lines the FAD pocket; the sequence is GGGMAG.

It belongs to the MnmG family. TrmFO subfamily. The cofactor is FAD.

The protein resides in the cytoplasm. The enzyme catalyses uridine(54) in tRNA + (6R)-5,10-methylene-5,6,7,8-tetrahydrofolate + NADH + H(+) = 5-methyluridine(54) in tRNA + (6S)-5,6,7,8-tetrahydrofolate + NAD(+). The catalysed reaction is uridine(54) in tRNA + (6R)-5,10-methylene-5,6,7,8-tetrahydrofolate + NADPH + H(+) = 5-methyluridine(54) in tRNA + (6S)-5,6,7,8-tetrahydrofolate + NADP(+). In terms of biological role, catalyzes the folate-dependent formation of 5-methyl-uridine at position 54 (M-5-U54) in all tRNAs. This Roseobacter denitrificans (strain ATCC 33942 / OCh 114) (Erythrobacter sp. (strain OCh 114)) protein is Methylenetetrahydrofolate--tRNA-(uracil-5-)-methyltransferase TrmFO.